Reading from the N-terminus, the 567-residue chain is Urease subunit alpha (567 aa).

Residues 129-567 (GGIDTHIHWI…LPMAQRYFLF (439 aa)) enclose the Urease domain. Residues H134, H136, and K217 each coordinate Ni(2+). K217 carries the N6-carboxylysine modification. H219 contributes to the substrate binding site. The Ni(2+) site is built by H246 and H272. Catalysis depends on H320, which acts as the Proton donor. D360 is a Ni(2+) binding site.

It belongs to the metallo-dependent hydrolases superfamily. Urease alpha subunit family. In terms of assembly, heterotrimer of UreA (gamma), UreB (beta) and UreC (alpha) subunits. Three heterotrimers associate to form the active enzyme. The apoenzyme interacts with an accessory complex composed of UreD, UreF and UreG, which is required for the assembly of the nickel containing metallocenter of UreC. The UreE protein may also play a direct role as a metallochaperone in nickel transfer to the urease apoprotein. It depends on Ni cation as a cofactor. Carboxylation allows a single lysine to coordinate two nickel ions.

It localises to the cytoplasm. The catalysed reaction is urea + 2 H2O + H(+) = hydrogencarbonate + 2 NH4(+). It participates in nitrogen metabolism; urea degradation; CO(2) and NH(3) from urea (urease route): step 1/1. Its activity is regulated as follows. The apoenzyme can be activated in vitro in the presence of nickel ions and carbon dioxide, which promotes carboxylation of Lys-217. In Klebsiella aerogenes (Enterobacter aerogenes), this protein is Urease subunit alpha.